The sequence spans 560 residues: Dihydroxy-acid dehydratase (560 aa).

Positions 1–20 (MGDNLKKRSSMTTDGDNRAP) are disordered. Cysteine 52 contacts [2Fe-2S] cluster. Aspartate 84 is a Mg(2+) binding site. Position 125 (cysteine 125) interacts with [2Fe-2S] cluster. Positions 126 and 127 each coordinate Mg(2+). Residue lysine 127 is modified to N6-carboxylysine. A [2Fe-2S] cluster-binding site is contributed by cysteine 197. Residue glutamate 448 participates in Mg(2+) binding. Serine 474 (proton acceptor) is an active-site residue.

It belongs to the IlvD/Edd family. In terms of assembly, homodimer. [2Fe-2S] cluster serves as cofactor. It depends on Mg(2+) as a cofactor.

It carries out the reaction (2R)-2,3-dihydroxy-3-methylbutanoate = 3-methyl-2-oxobutanoate + H2O. The enzyme catalyses (2R,3R)-2,3-dihydroxy-3-methylpentanoate = (S)-3-methyl-2-oxopentanoate + H2O. The protein operates within amino-acid biosynthesis; L-isoleucine biosynthesis; L-isoleucine from 2-oxobutanoate: step 3/4. Its pathway is amino-acid biosynthesis; L-valine biosynthesis; L-valine from pyruvate: step 3/4. Functionally, functions in the biosynthesis of branched-chain amino acids. Catalyzes the dehydration of (2R,3R)-2,3-dihydroxy-3-methylpentanoate (2,3-dihydroxy-3-methylvalerate) into 2-oxo-3-methylpentanoate (2-oxo-3-methylvalerate) and of (2R)-2,3-dihydroxy-3-methylbutanoate (2,3-dihydroxyisovalerate) into 2-oxo-3-methylbutanoate (2-oxoisovalerate), the penultimate precursor to L-isoleucine and L-valine, respectively. This Leptospira interrogans serogroup Icterohaemorrhagiae serovar Lai (strain 56601) protein is Dihydroxy-acid dehydratase.